Reading from the N-terminus, the 721-residue chain is MQEPAITPEVIENHGLKPDEYDLILEIIGREPTFTELGIFSAMWNEHCSYKSSKKWLRTLPTSGPQVICGPGENAGIVDIGDGDAVVFKMESHNHPSYIEPYQGAATGVGGILRDVFTMGARPIASMNSLSFGEPAHHKTRQLVNGVVEGVGGYGNCFGVPCVGGEVRFHPAYNGNCLVNAFAAGLVKTDMIFYSAASGVGMPVVYLGAKTGRDGVGGATMASAEFDDTIEEKRPTVQVGDPFTEKRLMEATLELMQTGAVISIQDMGAAGLTCSAVEMGDKGGLGVRLDLEKVPQREENMTAYEMMLSESQERMLMVLKPELEAEAKAVFEKWDLDFAIVGETIAEDRFLIMHNGEVKADLPLSKLSSSAPEYDRPWIEVEAPAALTDADVPTIDPIDGLKALISSPNYAGKQWVYEQYDTTVMGDTARRPGLGGGMVRVHGTDKKLAFTSDVTPRYVKANPVEGGKQAVAEAYRNLCAVGAKPLATTDNLNFGNPEKPEIMGQFVGALKGIGEAVSALDMPIVSGNVSLYNETDGQAILPTPTIGAVGLVAAGEEPILGEARDGHVLLLVGETIGHLGQSALLHEVFNREDGDAPAVDLEIEKRNGEFIRNNRDFIKACTDISDGGLALAAFELAEAAGVGVQIDASDTPTLFGEDQARYLVACNFDQAEALMIAAGQAGVPLETVGKFTGDTVKMGGSEATLEELSQIFRTSFAEAVA.

The active site involves H47. Positions 50 and 89 each coordinate ATP. Residue E91 participates in Mg(2+) binding. Substrate is bound by residues 92-95 and R114; that span reads SHNH. H93 (proton acceptor) is an active-site residue. D115 lines the Mg(2+) pocket. Q238 lines the substrate pocket. D266 contributes to the Mg(2+) binding site. 310 to 312 lines the substrate pocket; that stretch reads ESQ. D490 and G527 together coordinate ATP. N528 lines the Mg(2+) pocket. S530 lines the substrate pocket.

This sequence belongs to the FGAMS family. As to quaternary structure, monomer. Part of the FGAM synthase complex composed of 1 PurL, 1 PurQ and 2 PurS subunits.

It is found in the cytoplasm. The catalysed reaction is N(2)-formyl-N(1)-(5-phospho-beta-D-ribosyl)glycinamide + L-glutamine + ATP + H2O = 2-formamido-N(1)-(5-O-phospho-beta-D-ribosyl)acetamidine + L-glutamate + ADP + phosphate + H(+). Its pathway is purine metabolism; IMP biosynthesis via de novo pathway; 5-amino-1-(5-phospho-D-ribosyl)imidazole from N(2)-formyl-N(1)-(5-phospho-D-ribosyl)glycinamide: step 1/2. Part of the phosphoribosylformylglycinamidine synthase complex involved in the purines biosynthetic pathway. Catalyzes the ATP-dependent conversion of formylglycinamide ribonucleotide (FGAR) and glutamine to yield formylglycinamidine ribonucleotide (FGAM) and glutamate. The FGAM synthase complex is composed of three subunits. PurQ produces an ammonia molecule by converting glutamine to glutamate. PurL transfers the ammonia molecule to FGAR to form FGAM in an ATP-dependent manner. PurS interacts with PurQ and PurL and is thought to assist in the transfer of the ammonia molecule from PurQ to PurL. The chain is Phosphoribosylformylglycinamidine synthase subunit PurL from Ruegeria sp. (strain TM1040) (Silicibacter sp.).